Consider the following 45-residue polypeptide: Defensin Tk-AMP-D3 (45 aa).

Cystine bridges form between C3–C45, C14–C34, C20–C39, and C24–C41.

Functionally, plant defense peptide. This Triticum kiharae (Wheat) protein is Defensin Tk-AMP-D3.